The chain runs to 239 residues: UPF0173 metal-dependent hydrolase Msm_0779 (239 aa).

Belongs to the UPF0173 family.

In Methanobrevibacter smithii (strain ATCC 35061 / DSM 861 / OCM 144 / PS), this protein is UPF0173 metal-dependent hydrolase Msm_0779.